Consider the following 794-residue polypeptide: Protein transport protein SEC23 G (794 aa).

The Zn(2+) site is built by Cys56, Cys59, Cys78, and Cys81. Residues 56-81 (CSRCGAVLNPYARVDYQSRIWSCPFC) form a zinc finger-like region.

This sequence belongs to the SEC23/SEC24 family. SEC23 subfamily. In terms of assembly, component of the coat protein complex II (COPII), composed of at least five proteins: the Sec23/24 complex, the Sec13/31 complex and Sar1. Interacts with SEC24A.

It localises to the cytoplasmic vesicle. It is found in the COPII-coated vesicle membrane. The protein localises to the endoplasmic reticulum membrane. The protein resides in the membrane. Its function is as follows. Component of the coat protein complex II (COPII) which promotes the formation of transport vesicles from the endoplasmic reticulum (ER). The coat has two main functions, the physical deformation of the endoplasmic reticulum membrane into vesicles and the selection of cargo molecules. The protein is Protein transport protein SEC23 G of Arabidopsis thaliana (Mouse-ear cress).